The following is a 168-amino-acid chain: Endoribonuclease YbeY (168 aa).

Zn(2+) contacts are provided by histidine 132, histidine 136, and histidine 142.

This sequence belongs to the endoribonuclease YbeY family. Zn(2+) is required as a cofactor.

The protein resides in the cytoplasm. Its function is as follows. Single strand-specific metallo-endoribonuclease involved in late-stage 70S ribosome quality control and in maturation of the 3' terminus of the 16S rRNA. The sequence is that of Endoribonuclease YbeY from Clostridium perfringens (strain ATCC 13124 / DSM 756 / JCM 1290 / NCIMB 6125 / NCTC 8237 / Type A).